Consider the following 1263-residue polypeptide: DNA polymerase II large subunit (1263 aa).

Positions 1224 to 1250 (LENFNSSGNNGKKIEKKEKKAKEKPKK) are disordered. The segment covering 1235–1244 (KKIEKKEKKA) has biased composition (basic and acidic residues).

It belongs to the archaeal DNA polymerase II family. In terms of assembly, heterodimer of a large subunit and a small subunit.

The catalysed reaction is DNA(n) + a 2'-deoxyribonucleoside 5'-triphosphate = DNA(n+1) + diphosphate. The enzyme catalyses Exonucleolytic cleavage in the 3'- to 5'-direction to yield nucleoside 5'-phosphates.. Its function is as follows. Possesses two activities: a DNA synthesis (polymerase) and an exonucleolytic activity that degrades single-stranded DNA in the 3'- to 5'-direction. Has a template-primer preference which is characteristic of a replicative DNA polymerase. The protein is DNA polymerase II large subunit (polC) of Pyrococcus furiosus (strain ATCC 43587 / DSM 3638 / JCM 8422 / Vc1).